We begin with the raw amino-acid sequence, 727 residues long: Catalase-peroxidase (727 aa).

Residues M1 to R26 are disordered. A cross-link (tryptophyl-tyrosyl-methioninium (Trp-Tyr) (with M-245)) is located at residues W97–Y219. The Proton acceptor role is filled by H98. The tryptophyl-tyrosyl-methioninium (Tyr-Met) (with W-97) cross-link spans Y219–M245. A heme b-binding site is contributed by H260.

It belongs to the peroxidase family. Peroxidase/catalase subfamily. In terms of assembly, homodimer or homotetramer. It depends on heme b as a cofactor. In terms of processing, formation of the three residue Trp-Tyr-Met cross-link is important for the catalase, but not the peroxidase activity of the enzyme.

The enzyme catalyses H2O2 + AH2 = A + 2 H2O. It carries out the reaction 2 H2O2 = O2 + 2 H2O. Bifunctional enzyme with both catalase and broad-spectrum peroxidase activity. In Allorhizobium ampelinum (strain ATCC BAA-846 / DSM 112012 / S4) (Agrobacterium vitis (strain S4)), this protein is Catalase-peroxidase.